A 220-amino-acid polypeptide reads, in one-letter code: WAP four-disulfide core domain protein 1 (220 aa).

Positions 1 to 31 (MPLTGVGPGSCRRQIIRALCLLLLLLHAGSA) are cleaved as a signal peptide. The interval 46-70 (KSRAEEAGAPGGPRQPRADRCPPPP) is disordered. The WAP domain maps to 59 to 108 (RQPRADRCPPPPRTLPPGACQAARCQADSECPRHRRCCYNGCAYACLEAV). 4 disulfides stabilise this stretch: Cys66-Cys96, Cys78-Cys100, Cys83-Cys95, and Cys89-Cys104. A disordered region spans residues 199–220 (EYPEGDSKNVAEPGRGQQKHFQ).

Its subcellular location is the secreted. Its function is as follows. Has growth inhibitory activity. The chain is WAP four-disulfide core domain protein 1 (WFDC1) from Homo sapiens (Human).